We begin with the raw amino-acid sequence, 465 residues long: MSFLVAIVGRANVGKSTLFNVLTNSHDALVFDFEGVTRDRQYGQAKYDDLDYLVVDTGGISDKDVGFDEFMAKQSQIAIDEANLVFFVVDGRSGLTTGDEYVASLLRQKDKKVVVVVNKVDGTDEEAAMAEFYSFGFDKVFAISAAHRRNTQKLVDKFLKKPLNEYYQDYTQTQEHKEQQRHGIHFSLIGRPNVGKSTLTNRMLGEDRVVVFDMPGTTIDSVSIPFERHGQKYTIVDTAGVRKRGKVKQTLEKFSVIKTLQAIQDSNVVVAVVDARQGISDQDLSLIHFAIKNGRALVLAVNKWDGMTEEDRIQVKQDLKRKLFFLQDYVDIHFISALYGTNVGHVFESIDTAYACANKKITTADATRLMQLAVEAHSPPMVGKFRIKLKYAHVGGHNPPVIVIHGNQVSRLPNSYKRYLENFFREALDFRGTPIVFEFKQSENPFADRKNKRSKDEGSKSKKVK.

2 consecutive EngA-type G domains span residues 3–166 (FLVA…LNEY) and 184–358 (IHFS…ACAN). GTP is bound by residues 9-16 (GRANVGKS), 56-60 (DTGGI), 118-121 (NKVD), 190-197 (GRPNVGKS), 237-241 (DTAGV), and 302-305 (NKWD). Residues 359-443 (KKITTADATR…PIVFEFKQSE (85 aa)) form the KH-like domain. The segment at 446 to 465 (FADRKNKRSKDEGSKSKKVK) is disordered.

This sequence belongs to the TRAFAC class TrmE-Era-EngA-EngB-Septin-like GTPase superfamily. EngA (Der) GTPase family. As to quaternary structure, associates with the 50S ribosomal subunit.

In terms of biological role, GTPase that plays an essential role in the late steps of ribosome biogenesis. The sequence is that of GTPase Der from Francisella tularensis subsp. holarctica (strain FTNF002-00 / FTA).